A 182-amino-acid polypeptide reads, in one-letter code: Fimbrial subunit type 1 (182 aa).

Positions 1–23 (MKIKTLAIVVLSALSLSSAAALA) are cleaved as a signal peptide. Residues C44 and C84 are joined by a disulfide bond.

This sequence belongs to the fimbrial protein family.

Its subcellular location is the fimbrium. The sequence is that of Fimbrial subunit type 1 from Klebsiella pneumoniae.